Here is a 146-residue protein sequence, read N- to C-terminus: 3-hydroxyacyl-[acyl-carrier-protein] dehydratase FabZ (146 aa).

Histidine 51 is a catalytic residue.

It belongs to the thioester dehydratase family. FabZ subfamily.

Its subcellular location is the cytoplasm. The catalysed reaction is a (3R)-hydroxyacyl-[ACP] = a (2E)-enoyl-[ACP] + H2O. Involved in unsaturated fatty acids biosynthesis. Catalyzes the dehydration of short chain beta-hydroxyacyl-ACPs and long chain saturated and unsaturated beta-hydroxyacyl-ACPs. This chain is 3-hydroxyacyl-[acyl-carrier-protein] dehydratase FabZ, found in Staphylococcus aureus (strain Mu3 / ATCC 700698).